A 313-amino-acid chain; its full sequence is Olfactory receptor 1J2 (313 aa).

Residues 1–25 are Extracellular-facing; that stretch reads MSPENQSSVSEFLLLGLPIRPEQQA. An N-linked (GlcNAc...) asparagine glycan is attached at asparagine 5. Residues 26–49 traverse the membrane as a helical segment; sequence VFFTLFLGMYLTTVLGNLLIMLLI. Over 50 to 57 the chain is Cytoplasmic; that stretch reads QLDSHLHT. Residues 58–79 form a helical membrane-spanning segment; it reads PMYFFLSHLALTDISFSSVTVP. Residues 80–100 are Extracellular-facing; that stretch reads KMLMDMRTKYKSILYEECISQ. A disulfide bridge connects residues cysteine 97 and cysteine 189. Residues 101 to 120 form a helical membrane-spanning segment; sequence MYFFIFFTDLDSFLITSMAY. The Cytoplasmic portion of the chain corresponds to 121–139; the sequence is DRYVAICHPLHYTVIMREE. The chain crosses the membrane as a helical span at residues 140–158; sequence LCVFLVAVSWILSCASSLS. Topologically, residues 159 to 196 are extracellular; the sequence is HTLLLTRLSFCAANTIPHVFCDLAALLKLSCSDIFLNE. A helical membrane pass occupies residues 197–219; the sequence is LVMFTVGVVVITLPFMCILVSYG. Residues 220–236 are Cytoplasmic-facing; it reads YIGATILRVPSTKGIHK. Residues 237-259 traverse the membrane as a helical segment; sequence ALSTCGSHLSVVSLYYGSIFGQY. The Extracellular portion of the chain corresponds to 260-272; it reads LFPTVSSSIDKDV. A helical membrane pass occupies residues 273-292; sequence IVALMYTVVTPMLNPFIYSL. Topologically, residues 293 to 313 are cytoplasmic; the sequence is RNRDMKEALGKLFSRATFFSW.

Belongs to the G-protein coupled receptor 1 family.

The protein resides in the cell membrane. Its function is as follows. Odorant receptor. The protein is Olfactory receptor 1J2 (OR1J2) of Homo sapiens (Human).